The sequence spans 374 residues: tRNA-specific 2-thiouridylase MnmA (374 aa).

ATP is bound by residues 12–19 and methionine 38; that span reads GMSGGVDS. Residues 98-100 are interaction with target base in tRNA; sequence NPD. Cysteine 103 acts as the Nucleophile in catalysis. Cysteines 103 and 200 form a disulfide. Glycine 127 serves as a coordination point for ATP. The tract at residues 150 to 152 is interaction with tRNA; that stretch reads KDQ. Catalysis depends on cysteine 200, which acts as the Cysteine persulfide intermediate. The interaction with tRNA stretch occupies residues 311 to 312; that stretch reads RY.

Belongs to the MnmA/TRMU family.

The protein localises to the cytoplasm. It catalyses the reaction S-sulfanyl-L-cysteinyl-[protein] + uridine(34) in tRNA + AH2 + ATP = 2-thiouridine(34) in tRNA + L-cysteinyl-[protein] + A + AMP + diphosphate + H(+). Its function is as follows. Catalyzes the 2-thiolation of uridine at the wobble position (U34) of tRNA, leading to the formation of s(2)U34. The polypeptide is tRNA-specific 2-thiouridylase MnmA (Enterococcus faecalis (strain ATCC 700802 / V583)).